The following is a 137-amino-acid chain: Small ribosomal subunit protein uS12 (137 aa).

A disordered region spans residues 1-55 (MPTINQLVRKPRKSKVEKSDSPALNKGYNSFKKTQTNVNSPQKRGVCTRVGTMTP). Over residues 27 to 42 (GYNSFKKTQTNVNSPQ) the composition is skewed to polar residues. The residue at position 102 (Asp102) is a 3-methylthioaspartic acid.

It belongs to the universal ribosomal protein uS12 family. Part of the 30S ribosomal subunit. Contacts proteins S8 and S17. May interact with IF1 in the 30S initiation complex.

Its function is as follows. With S4 and S5 plays an important role in translational accuracy. Functionally, interacts with and stabilizes bases of the 16S rRNA that are involved in tRNA selection in the A site and with the mRNA backbone. Located at the interface of the 30S and 50S subunits, it traverses the body of the 30S subunit contacting proteins on the other side and probably holding the rRNA structure together. The combined cluster of proteins S8, S12 and S17 appears to hold together the shoulder and platform of the 30S subunit. The polypeptide is Small ribosomal subunit protein uS12 (Enterococcus faecalis (strain ATCC 700802 / V583)).